Here is a 623-residue protein sequence, read N- to C-terminus: Glutathione import ATP-binding protein GsiA (623 aa).

ABC transporter domains lie at 15 to 269 (VSGL…QTLL) and 325 to 564 (LRSG…RKLM). ATP contacts are provided by residues 49–56 (GESGSGKS) and 357–364 (GESGSGKS).

Belongs to the ABC transporter superfamily. Glutathione importer (TC 3.A.1.5.11) family. In terms of assembly, the complex is composed of two ATP-binding proteins (GsiA), two transmembrane proteins (GsiC and GsiD) and a solute-binding protein (GsiB).

It is found in the cell inner membrane. The catalysed reaction is glutathione(out) + ATP + H2O = glutathione(in) + ADP + phosphate + H(+). Its function is as follows. Part of the ABC transporter complex GsiABCD involved in glutathione import. Responsible for energy coupling to the transport system. The chain is Glutathione import ATP-binding protein GsiA from Salmonella choleraesuis (strain SC-B67).